Here is a 158-residue protein sequence, read N- to C-terminus: Regulator of sigma D (158 aa).

The protein belongs to the Rsd/AlgQ family. Interacts with RpoD.

It localises to the cytoplasm. In terms of biological role, binds RpoD and negatively regulates RpoD-mediated transcription activation by preventing the interaction between the primary sigma factor RpoD with the catalytic core of the RNA polymerase and with promoter DNA. May be involved in replacement of the RNA polymerase sigma subunit from RpoD to RpoS during the transition from exponential growth to the stationary phase. The polypeptide is Regulator of sigma D (Shigella boydii serotype 4 (strain Sb227)).